A 338-amino-acid polypeptide reads, in one-letter code: Glycerol-3-phosphate dehydrogenase [NAD(P)+] (338 aa).

Residues Ser13, Trp14, and Lys108 each contribute to the NADPH site. 3 residues coordinate sn-glycerol 3-phosphate: Lys108, Gly139, and Ser141. Residue Ala143 participates in NADPH binding. Residues Lys194, Asp247, Ser257, Arg258, and Asn259 each coordinate sn-glycerol 3-phosphate. The active-site Proton acceptor is the Lys194. Arg258 contributes to the NADPH binding site. The NADPH site is built by Val282 and Glu284.

It belongs to the NAD-dependent glycerol-3-phosphate dehydrogenase family.

The protein resides in the cytoplasm. The enzyme catalyses sn-glycerol 3-phosphate + NAD(+) = dihydroxyacetone phosphate + NADH + H(+). It carries out the reaction sn-glycerol 3-phosphate + NADP(+) = dihydroxyacetone phosphate + NADPH + H(+). Its pathway is membrane lipid metabolism; glycerophospholipid metabolism. Its function is as follows. Catalyzes the reduction of the glycolytic intermediate dihydroxyacetone phosphate (DHAP) to sn-glycerol 3-phosphate (G3P), the key precursor for phospholipid synthesis. This Listeria monocytogenes serotype 4b (strain CLIP80459) protein is Glycerol-3-phosphate dehydrogenase [NAD(P)+].